Consider the following 221-residue polypeptide: GTP-binding nuclear protein Ran-2 (221 aa).

Residues 10–174 form the Small GTPase Ran-type domain; sequence DYPSFKLVIV…LYLARKLAGD (165 aa). 21-28 is a binding site for GTP; sequence DGGTGKTT. A switch-I region spans residues 40 to 48; that stretch reads KKYEPTIGV. GTP contacts are provided by residues Gly-71, 125 to 128, and 153 to 155; these read NKVD and SAK. The segment at 71–87 is switch-II; that stretch reads GQEKFGGLRDGYYIHGQ. The segment covering 202 to 212 has biased composition (low complexity); sequence ADLAAAAAQPL. The interval 202-221 is disordered; sequence ADLAAAAAQPLPDDDDDAFE.

The protein belongs to the small GTPase superfamily. Ran family. Found in a nuclear export complex with RanGTP, exportin and pre-miRNA. Interacts with RanBP1a and RanBP1b. Interacts with PHRIP1. Interacts with KPNB1. Binds to PHIP1.

It localises to the nucleus. The protein localises to the nucleus envelope. GTP-binding protein involved in nucleocytoplasmic transport. Required for the import of protein into the nucleus and also for RNA export. Involved in chromatin condensation and control of cell cycle. This is GTP-binding nuclear protein Ran-2 from Arabidopsis thaliana (Mouse-ear cress).